A 337-amino-acid chain; its full sequence is Junctional sarcoplasmic reticulum protein 1 (337 aa).

The mediates interaction with CACNA1S stretch occupies residues 1-84; the sequence is MATRAMEELD…EKEPVSKVTS (84 aa). Disordered stretches follow at residues 23-125 and 159-337; these read SALA…ELPW and EAPA…KGRD. Basic and acidic residues-rich tracts occupy residues 49–59 and 69–79; these read SRSHDSQERVT and TKPKKMEKEPV. Over residues 165 to 180 the composition is skewed to low complexity; sequence PESWASSSSSPKGPAS. Basic and acidic residues predominate over residues 199-213; sequence SKLEERVQIPRSEEA. Over residues 214–225 the composition is skewed to acidic residues; sequence AEKDEWESEEAA. 3 stretches are compositionally biased toward basic and acidic residues: residues 236 to 277, 285 to 309, and 316 to 325; these read GPKE…RGAR, RRWE…DRKR, and RRPDEEDRPL. Residues 326–337 show a composition bias toward basic residues; the sequence is GRQKRRAGKGRD.

In terms of assembly, interacts with CACNA1S, CACNB1 and calsequestrin.

It is found in the sarcoplasmic reticulum membrane. It localises to the endoplasmic reticulum membrane. Involved in skeletal muscle excitation/contraction coupling (EC), probably acting as a regulator of the voltage-sensitive calcium channel CACNA1S. EC is a physiological process whereby an electrical signal (depolarization of the plasma membrane) is converted into a chemical signal, a calcium gradient, by the opening of ryanodine receptor calcium release channels. May regulate CACNA1S membrane targeting and activity. In Bos taurus (Bovine), this protein is Junctional sarcoplasmic reticulum protein 1 (JSRP1).